The following is a 350-amino-acid chain: Putative F-box protein At1g23770 (350 aa).

Residues 1 to 15 (MDTGFADSNNDSSPG) are compositionally biased toward polar residues. A disordered region spans residues 1–29 (MDTGFADSNNDSSPGEGSKRGNSGIEGPV). Positions 206–252 (PPCLMLLPTELKLKILELLPGVSIGYMACVCTEMRYLASDNDLWEHK) constitute an F-box domain.

The chain is Putative F-box protein At1g23770 from Arabidopsis thaliana (Mouse-ear cress).